Consider the following 138-residue polypeptide: Translation initiation factor 5A (138 aa).

The residue at position 42 (lysine 42) is a Hypusine.

This sequence belongs to the eIF-5A family.

It localises to the cytoplasm. Functions by promoting the formation of the first peptide bond. The chain is Translation initiation factor 5A (eif5a) from Pyrobaculum aerophilum (strain ATCC 51768 / DSM 7523 / JCM 9630 / CIP 104966 / NBRC 100827 / IM2).